We begin with the raw amino-acid sequence, 505 residues long: OVARIAN TUMOR DOMAIN-containing deubiquitinating enzyme 6 (505 aa).

Residues 1–191 (MTRILVQRGS…NSSDEHMPCY (191 aa)) form a disordered region. A compositionally biased stretch (low complexity) spans 9–30 (GSSGSSSNSSRPSSSSSSSSGS). A compositionally biased stretch (basic and acidic residues) spans 51 to 72 (DEKQEEVTVVEKAECSDAKDVA). Over residues 73–86 (VDSDEPADREDDEG) the composition is skewed to acidic residues. A compositionally biased stretch (pro residues) spans 115–124 (PPVPAPPPKP). Low complexity predominate over residues 159-173 (SSRSSPTGSHPSSPR). A compositionally biased stretch (basic and acidic residues) spans 174 to 188 (SHSENEGYNSSDEHM). Residues 216-339 (FEIRRMLEDG…GNHYNSLVDP (124 aa)) enclose the OTU domain. Residue aspartate 224 is part of the active site. The Nucleophile role is filled by cysteine 227. Residue histidine 332 is part of the active site. The tract at residues 416–447 (RIGPKESSTSNAETSSSGARPSGSDSKPAEAV) is disordered. Over residues 421 to 441 (ESSTSNAETSSSGARPSGSDS) the composition is skewed to low complexity. In terms of domain architecture, UBA spans 446 to 491 (AVKEKTVLSSSIEMVLSMGFSYAQAMEAYSIFGDDVDSMVCYVLET).

It belongs to the peptidase C85 family. In terms of assembly, interacts with KDM1C. Mostly expressed in stems flowers and siliques, and, to a lower extent, in leaves, roots and seedlings.

It localises to the nucleus. Its subcellular location is the cytoplasm. It carries out the reaction Thiol-dependent hydrolysis of ester, thioester, amide, peptide and isopeptide bonds formed by the C-terminal Gly of ubiquitin (a 76-residue protein attached to proteins as an intracellular targeting signal).. Hydrolase that can remove conjugated ubiquitin from proteins in vitro and may therefore play an important regulatory role at the level of protein turnover by preventing degradation. Binds chromatin (e.g. nucleosomes and histones) and has enzymatic histone deubiquitinase activity, specific for the H2B histone. Can both repress (e.g. OSR2) and promote (e.g. AN3) the expression of target genes by associating with chromatin, deubiquitinating H2B and regulating its euchromatic histone marks (e.g. H3ac and H3K4me). In association with LDL1/KDM1C, involved in transcriptional gene repression via histone deubiquitination and demethylation. Promotes the concerted epigenetic regulation and repression (e.g. the removal of euchromatic histone acetylation, ubiquitination, and methylation marks) of a set of genes (e.g. GA20OX, WUS, OSR2, ARL and ABI5) that collectively limit plant growth thus stimulating plant growth and increasing cell size. In Arabidopsis thaliana (Mouse-ear cress), this protein is OVARIAN TUMOR DOMAIN-containing deubiquitinating enzyme 6.